The following is a 605-amino-acid chain: Vicilin GC72-A (605 aa).

The signal sequence occupies residues 1-23; that stretch reads MVRNKSVFVVLLFSLFLSFGLLC. Disordered regions lie at residues 52–81 and 157–181; these read TRGQ…EDPQ and GERE…QRNN. Acidic residues predominate over residues 166-175; the sequence is EEEEESDEGE. Cupin type-1 domains lie at 183 to 341 and 387 to 564; these read YYFH…EQLD and FNLL…RLVD. Residues 465–485 are disordered; the sequence is SSDWSSREEEEQEEQEVERRS.

It belongs to the 7S seed storage protein family.

Its subcellular location is the vacuole. The protein resides in the aleurone grain. Functionally, seed storage protein. This chain is Vicilin GC72-A, found in Gossypium hirsutum (Upland cotton).